An 807-amino-acid polypeptide reads, in one-letter code: Spondin-1 (807 aa).

The signal sequence occupies residues 1-28 (MRLSPAPLKLSRTPALLALALPLAAALA). The 166-residue stretch at 29–194 (FSDETLDKVP…DSTFDGVTDK (166 aa)) folds into the Reelin domain. 17 disulfides stabilise this stretch: Cys44/Cys128, Cys156/Cys182, Cys199/Cys336, Cys200/Cys340, Cys202/Cys415, Cys443/Cys480, Cys454/Cys489, Cys459/Cys494, Cys502/Cys538, Cys513/Cys517, Cys548/Cys554, Cys559/Cys595, Cys570/Cys574, Cys605/Cys610, Cys615/Cys650, Cys626/Cys630, and Cys660/Cys665. One can recognise a Spondin domain in the interval 195–388 (PILDCCACGT…LTSLDHPQSP (194 aa)). Asn214 carries N-linked (GlcNAc...) asparagine glycosylation. Asp325, Asp354, and Asp358 together coordinate Ca(2+). TSP type-1 domains follow at residues 442 to 495 (TCIY…PGCS), 501 to 555 (TCTM…EECS), 558 to 611 (SCLM…PECH), 614 to 666 (PCLL…PECP), 668 to 721 (DCEL…RKCL), and 754 to 806 (GCRM…NVHP). A C-linked (Man) tryptophan glycan is attached at Trp448. A glycan (C-linked (Man) tryptophan; partial) is linked at Trp451. C-linked (Man) tryptophan glycosylation is present at Trp507. Trp510 carries C-linked (Man) tryptophan; partial glycosylation. A glycan (C-linked (Man) tryptophan) is linked at Trp564. Residue Trp620 is glycosylated (C-linked (Man) tryptophan; partial). The C-linked (Man) tryptophan glycan is linked to Trp623. Trp674 carries a C-linked (Man) tryptophan glycan. A glycan (N-linked (GlcNAc...) asparagine) is linked at Asn681.

As to quaternary structure, binds to the central extracellular domain of APP and inhibits beta-secretase cleavage of APP. In terms of tissue distribution, highest expression in lung, lower expression in brain, heart, kidney, liver and testis, and lowest expression in pancreas, skeletal muscle and ovary. Not expressed in spleen.

The protein localises to the secreted. Its subcellular location is the extracellular space. It localises to the extracellular matrix. Cell adhesion protein that promotes the attachment of spinal cord and sensory neuron cells and the outgrowth of neurites in vitro. May contribute to the growth and guidance of axons in both the spinal cord and the PNS. Major factor for vascular smooth muscle cell. The protein is Spondin-1 (SPON1) of Homo sapiens (Human).